The following is a 390-amino-acid chain: Large ribosomal subunit protein mL44 (390 aa).

The transit peptide at 1-59 directs the protein to the mitochondrion; sequence MGIVLKRAIAAGMKPFPNSTWHWSRTIRPFSQHLSSTCFLQQSSRFTSKRYLHLSTLTQ. In terms of domain architecture, RNase III spans 139–205; that stretch reads AFVNTVPTNK…LAHIAKYWGI (67 aa). One can recognise a DRBM domain in the interval 302-372; it reads QPTRELAMLC…ATDALMKWYC (71 aa).

Belongs to the ribonuclease III family. Mitochondrion-specific ribosomal protein mL44 subfamily. Component of the mitochondrial large ribosomal subunit (mt-LSU). Mature yeast 74S mitochondrial ribosomes consist of a small (37S) and a large (54S) subunit. The 37S small subunit contains a 15S ribosomal RNA (15S mt-rRNA) and 34 different proteins. The 54S large subunit contains a 21S rRNA (21S mt-rRNA) and 46 different proteins. mL44 forms a heterodimer with mL57 and stabilizes rRNA expansion segments 1/2 at a membrane-facing protuberance close to the point of attachment of the ribosome to the translocon in the membrane.

The protein resides in the mitochondrion. Its function is as follows. Component of the mitochondrial ribosome (mitoribosome), a dedicated translation machinery responsible for the synthesis of mitochondrial genome-encoded proteins, including at least some of the essential transmembrane subunits of the mitochondrial respiratory chain. The mitoribosomes are attached to the mitochondrial inner membrane and translation products are cotranslationally integrated into the membrane. This chain is Large ribosomal subunit protein mL44 (MRPL3), found in Saccharomyces cerevisiae (strain ATCC 204508 / S288c) (Baker's yeast).